Here is a 77-residue protein sequence, read N- to C-terminus: Small ribosomal subunit protein bS21 (77 aa).

It belongs to the bacterial ribosomal protein bS21 family.

The polypeptide is Small ribosomal subunit protein bS21 (Bartonella tribocorum (strain CIP 105476 / IBS 506)).